Consider the following 157-residue polypeptide: Arginine regulator (157 aa).

Belongs to the ArgR family.

The protein localises to the cytoplasm. The protein operates within amino-acid degradation; L-arginine degradation via ADI pathway. In terms of biological role, regulates the transcription of the arc operon, involved in arginine catabolism. The chain is Arginine regulator (argR1) from Streptococcus pyogenes serotype M3 (strain ATCC BAA-595 / MGAS315).